The sequence spans 1087 residues: Formin-H (1087 aa).

Polar residues predominate over residues 1 to 23; it reads MSFDLESNSSGGSTIGRNSSIRL. Residues 1-25 are disordered; it reads MSFDLESNSSGGSTIGRNSSIRLSS. Residues 34–394 form the GBD/FH3 domain; that stretch reads VSLNEIIDLD…QLEDELKIHP (361 aa). Composition is skewed to low complexity over residues 416-436 and 549-558; these read FGFG…SMAK and SPGSTLSPSP. Disordered regions lie at residues 416-445, 549-625, and 1048-1087; these read FGFG…DNEE, SPGS…PAKP, and VDSL…QLKK. Residues 433-461 are a coiled coil; that stretch reads SMAKTELKKDNEEKQKTIEHLLKQLNKFS. Residues 569–588 are compositionally biased toward polar residues; the sequence is FGITSSSIHTSTDKLTNSTE. The FH1 domain occupies 589–615; sequence PILGSPPPPPPPPMSGGGGPPPPPPPP. Over residues 592 to 616 the composition is skewed to pro residues; that stretch reads GSPPPPPPPPMSGGGGPPPPPPPPG. Residues 623 to 1016 enclose the FH2 domain; that stretch reads AKPIIKPSVK…ENSKMEDPEK (394 aa). The 39-residue stretch at 1013 to 1051 folds into the DAD domain; sequence DPEKGGLQDLSSQIRSGQLFKDRRVGDSVIAQMQNVDSL.

This sequence belongs to the formin homology family. Diaphanous subfamily. Interacts with vasP, proB/profilin-2 and rac1A. Interacts (via GBD/FH3 domain) with activated Rho-GTPases.

It localises to the cytoplasm. The protein localises to the cell cortex. The protein resides in the cytoskeleton. In terms of biological role, formins play an important role in the nucleation of actin and the formation of linear actin filaments. Important for cell migration and formation, elongation and maintenance of filopodia. Specifically controls filopodial dynamics by regulating actin turnover at the barbed ends of actin filaments. This chain is Formin-H (forH), found in Dictyostelium discoideum (Social amoeba).